Reading from the N-terminus, the 394-residue chain is General receptor for phosphoinositides 1-associated scaffold protein (394 aa).

The interval 1–51 (MTLRRLRKLQQKEEATAAPDLAGRAPDSEAARAAPTPSGPPAAAAPPGAPG) is disordered. Residues 37–49 (PSGPPAAAAPPGA) are compositionally biased toward pro residues. Position 76 is a phosphothreonine (threonine 76). Serine 93 is subject to Phosphoserine. Residues 100–189 (VLTLEKGDNQ…VLRLETLYGT (90 aa)) enclose the PDZ domain. The interaction with PSCD3 stretch occupies residues 180-257 (VLRLETLYGT…GAGLLPGSLP (78 aa)). The residue at position 236 (tyrosine 236) is a Phosphotyrosine. Arginine 269 is modified (omega-N-methylarginine). Residues 293 to 318 (EPQALPPPPPPARAPGPGSAETPASV) are disordered. Residues 296-306 (ALPPPPPPARA) are compositionally biased toward pro residues. The residue at position 386 (serine 386) is a Phosphoserine.

In terms of assembly, heteromer. Composed of TAMALIN, CYTH2 and at least one GRM1. Also interacts with CYTH3, GRM2, GRM3 and GRM5. As to expression, expressed in brain.

It localises to the cytoplasm. Its subcellular location is the perinuclear region. The protein localises to the cell membrane. The protein resides in the postsynaptic cell membrane. In terms of biological role, plays a role in intracellular trafficking and contributes to the macromolecular organization of group 1 metabotropic glutamate receptors (mGluRs) at synapses. The protein is General receptor for phosphoinositides 1-associated scaffold protein of Rattus norvegicus (Rat).